Consider the following 398-residue polypeptide: Selenide, water dikinase (398 aa).

The segment at 1–21 (MSHKRPQSSAGESNGAVDLKT) is disordered. Cysteine 46 is a catalytic residue. ATP is bound by residues lysine 49, 72-74 (GMD), aspartate 97, aspartate 120, and 171-174 (GGQT). Aspartate 74 is a Mg(2+) binding site. Aspartate 120 contacts Mg(2+). Aspartate 278 lines the Mg(2+) pocket.

Belongs to the selenophosphate synthase 1 family. Class I subfamily. In terms of assembly, homodimer. Mg(2+) is required as a cofactor.

The catalysed reaction is hydrogenselenide + ATP + H2O = selenophosphate + AMP + phosphate + 2 H(+). Its function is as follows. Synthesizes selenophosphate from selenide and ATP. The sequence is that of Selenide, water dikinase from Leishmania major.